A 167-amino-acid chain; its full sequence is CDP-archaeol synthase (167 aa).

A run of 5 helical transmembrane segments spans residues 4–24, 51–71, 80–100, 104–124, and 139–158; these read ILEA…PVIL, GFLG…IIYP, FKVS…GSFI, LNLP…LISA, and VLLL…VLAY.

The protein belongs to the CDP-archaeol synthase family. It depends on Mg(2+) as a cofactor.

It is found in the cell membrane. The catalysed reaction is 2,3-bis-O-(geranylgeranyl)-sn-glycerol 1-phosphate + CTP + H(+) = CDP-2,3-bis-O-(geranylgeranyl)-sn-glycerol + diphosphate. The protein operates within membrane lipid metabolism; glycerophospholipid metabolism. Functionally, catalyzes the formation of CDP-2,3-bis-(O-geranylgeranyl)-sn-glycerol (CDP-archaeol) from 2,3-bis-(O-geranylgeranyl)-sn-glycerol 1-phosphate (DGGGP) and CTP. This reaction is the third ether-bond-formation step in the biosynthesis of archaeal membrane lipids. This is CDP-archaeol synthase from Pyrococcus furiosus (strain ATCC 43587 / DSM 3638 / JCM 8422 / Vc1).